The following is a 468-amino-acid chain: Replication factor C large subunit (468 aa).

50 to 57 contacts ATP; sequence GPPGSGKT. Positions 422-456 are disordered; that stretch reads EEKAVEEKVEEEEAEEEEEEERKEEEKPKAEKKKG. The segment covering 429–444 has biased composition (acidic residues); that stretch reads KVEEEEAEEEEEEERK.

It belongs to the activator 1 small subunits family. RfcL subfamily. In terms of assembly, heteromultimer composed of small subunits (RfcS) and large subunits (RfcL).

Its function is as follows. Part of the RFC clamp loader complex which loads the PCNA sliding clamp onto DNA. The polypeptide is Replication factor C large subunit (Pyrococcus horikoshii (strain ATCC 700860 / DSM 12428 / JCM 9974 / NBRC 100139 / OT-3)).